Here is a 142-residue protein sequence, read N- to C-terminus: Large ribosomal subunit protein uL11 (142 aa).

The protein belongs to the universal ribosomal protein uL11 family. In terms of assembly, part of the ribosomal stalk of the 50S ribosomal subunit. Interacts with L10 and the large rRNA to form the base of the stalk. L10 forms an elongated spine to which L12 dimers bind in a sequential fashion forming a multimeric L10(L12)X complex. One or more lysine residues are methylated.

Its function is as follows. Forms part of the ribosomal stalk which helps the ribosome interact with GTP-bound translation factors. This chain is Large ribosomal subunit protein uL11, found in Magnetococcus marinus (strain ATCC BAA-1437 / JCM 17883 / MC-1).